The sequence spans 87 residues: Putative defensin-like protein 231 (87 aa).

Positions 1–26 (MKFATCFLVSYVLVFLVLSVCKEVEA) are cleaved as a signal peptide. Cystine bridges form between cysteine 30/cysteine 85, cysteine 40/cysteine 66, cysteine 48/cysteine 79, and cysteine 64/cysteine 81.

This sequence belongs to the DEFL family.

The protein localises to the secreted. This chain is Putative defensin-like protein 231 (SCRL25), found in Arabidopsis thaliana (Mouse-ear cress).